We begin with the raw amino-acid sequence, 179 residues long: Large ribosomal subunit protein uL10 (179 aa).

The segment at Lys-137–Glu-179 is binds L7/L12 dimers.

In terms of assembly, part of the ribosomal stalk of the 50S ribosomal subunit. The N-terminus interacts with L11 and 23S rRNA to form the base of the stalk. The C-terminus forms an elongated spine to which 3 L12 dimers bind in a sequential fashion forming a heptameric L10(L12)2(L12)2(L12)2 complex.

Functionally, forms part of the ribosomal stalk, playing a central role in the interaction of the ribosome with GTP-bound translation factors (such as IF-2, EF-Tu, EF-G and RF3). In Thermotoga maritima (strain ATCC 43589 / DSM 3109 / JCM 10099 / NBRC 100826 / MSB8), this protein is Large ribosomal subunit protein uL10 (rplJ).